Consider the following 412-residue polypeptide: Alpha-ketoglutarate-dependent sulfonate dioxygenase (412 aa).

S52 is subject to Phosphoserine. Residues H218 and D220 each contribute to the Fe cation site. 2-oxoglutarate is bound by residues T245 and W352. Residue H367 coordinates Fe cation. 2 residues coordinate 2-oxoglutarate: R379 and R383.

The protein belongs to the TfdA dioxygenase family. Requires Fe(2+) as cofactor.

It participates in organosulfur degradation; alkanesulfonate degradation. Its function is as follows. Acts as an alpha-ketoglutarate-dependent dioxygenase active on sulfonates. Although taurine is a poor substrate, a variety of other sulfonates are utilized, with the best natural substrates being isethionate and taurocholate. The protein is Alpha-ketoglutarate-dependent sulfonate dioxygenase (JLP1) of Saccharomyces cerevisiae (strain ATCC 204508 / S288c) (Baker's yeast).